Here is a 259-residue protein sequence, read N- to C-terminus: Ribosomal RNA small subunit methyltransferase A (259 aa).

6 residues coordinate S-adenosyl-L-methionine: asparagine 13, leucine 15, glycine 39, glutamate 60, aspartate 84, and asparagine 101.

It belongs to the class I-like SAM-binding methyltransferase superfamily. rRNA adenine N(6)-methyltransferase family. RsmA subfamily.

It localises to the cytoplasm. It carries out the reaction adenosine(1518)/adenosine(1519) in 16S rRNA + 4 S-adenosyl-L-methionine = N(6)-dimethyladenosine(1518)/N(6)-dimethyladenosine(1519) in 16S rRNA + 4 S-adenosyl-L-homocysteine + 4 H(+). Its function is as follows. Specifically dimethylates two adjacent adenosines (A1518 and A1519) in the loop of a conserved hairpin near the 3'-end of 16S rRNA in the 30S particle. May play a critical role in biogenesis of 30S subunits. This chain is Ribosomal RNA small subunit methyltransferase A, found in Mesomycoplasma hyopneumoniae (strain J / ATCC 25934 / NCTC 10110) (Mycoplasma hyopneumoniae).